Here is a 513-residue protein sequence, read N- to C-terminus: Light-independent protochlorophyllide reductase subunit B (513 aa).

Residue D36 participates in [4Fe-4S] cluster binding. The Proton donor role is filled by D299. G434–M435 contributes to the substrate binding site.

Belongs to the ChlB/BchB/BchZ family. As to quaternary structure, protochlorophyllide reductase is composed of three subunits; ChlL, ChlN and ChlB. Forms a heterotetramer of two ChlB and two ChlN subunits. [4Fe-4S] cluster is required as a cofactor.

Its subcellular location is the plastid. It is found in the chloroplast. It catalyses the reaction chlorophyllide a + oxidized 2[4Fe-4S]-[ferredoxin] + 2 ADP + 2 phosphate = protochlorophyllide a + reduced 2[4Fe-4S]-[ferredoxin] + 2 ATP + 2 H2O. It functions in the pathway porphyrin-containing compound metabolism; chlorophyll biosynthesis (light-independent). Component of the dark-operative protochlorophyllide reductase (DPOR) that uses Mg-ATP and reduced ferredoxin to reduce ring D of protochlorophyllide (Pchlide) to form chlorophyllide a (Chlide). This reaction is light-independent. The NB-protein (ChlN-ChlB) is the catalytic component of the complex. The chain is Light-independent protochlorophyllide reductase subunit B from Cycas taitungensis (Prince sago).